The primary structure comprises 885 residues: Leucine--tRNA ligase (885 aa).

Positions 48-58 (PYPSGKLHMGH) match the 'HIGH' region motif. The 'KMSKS' region motif lies at 639-643 (TMSKS). ATP is bound at residue lysine 642.

The protein belongs to the class-I aminoacyl-tRNA synthetase family.

The protein resides in the cytoplasm. It catalyses the reaction tRNA(Leu) + L-leucine + ATP = L-leucyl-tRNA(Leu) + AMP + diphosphate. The sequence is that of Leucine--tRNA ligase from Bordetella avium (strain 197N).